The primary structure comprises 225 residues: Ribosomal RNA small subunit methyltransferase G (225 aa).

Residues G71, L76, 121–122, and R139 contribute to the S-adenosyl-L-methionine site; that span reads AE. The interval 204 to 225 is disordered; sequence VVEARRATPSNGRGRPGRSSRR.

It belongs to the methyltransferase superfamily. RNA methyltransferase RsmG family.

The protein resides in the cytoplasm. Its function is as follows. Specifically methylates the N7 position of guanine in position 518 of 16S rRNA. The chain is Ribosomal RNA small subunit methyltransferase G from Mycobacterium sp. (strain JLS).